Here is a 260-residue protein sequence, read N- to C-terminus: Carbonic anhydrase (260 aa).

Residues 1 to 31 (MAHAWGYGPADGPESWAESFPIANGPRQSPI) form a disordered region. One can recognise an Alpha-carbonic anhydrase domain in the interval 3–259 (HAWGYGPADG…LKGRKVRASF (257 aa)). The Proton acceptor role is filled by His-64. 3 residues coordinate Zn(2+): His-94, His-96, and His-119. Residue Tyr-127 is part of the active site. Residue 198 to 199 (TT) coordinates substrate.

This sequence belongs to the alpha-carbonic anhydrase family. The cofactor is Zn(2+).

It carries out the reaction hydrogencarbonate + H(+) = CO2 + H2O. Its function is as follows. Reversible hydration of carbon dioxide. In Danio rerio (Zebrafish), this protein is Carbonic anhydrase (cahz).